The primary structure comprises 585 residues: Arginine--tRNA ligase (585 aa).

A 'HIGH' region motif is present at residues 130–140; the sequence is ANPTGPMHVGH.

It belongs to the class-I aminoacyl-tRNA synthetase family. Monomer.

The protein resides in the cytoplasm. It carries out the reaction tRNA(Arg) + L-arginine + ATP = L-arginyl-tRNA(Arg) + AMP + diphosphate. The polypeptide is Arginine--tRNA ligase (Methylorubrum extorquens (strain PA1) (Methylobacterium extorquens)).